A 548-amino-acid chain; its full sequence is Membrane protein insertase YidC (548 aa).

The helical transmembrane segment at 6–26 (NLLVIALLFVSFMIWQAWEQD) threads the bilayer. Residues 28–55 (NPQPQAQQTTQTTTTAAGSAADQGVPAS) are disordered. The span at 30-50 (QPQAQQTTQTTTTAAGSAADQ) shows a compositional bias: low complexity. The next 4 membrane-spanning stretches (helical) occupy residues 350–370 (FVGN…GIMY), 420–440 (LGGC…YYML), 458–478 (LSAQ…MFFI), and 499–519 (PVIF…YYIV).

This sequence belongs to the OXA1/ALB3/YidC family. Type 1 subfamily. In terms of assembly, interacts with the Sec translocase complex via SecD. Specifically interacts with transmembrane segments of nascent integral membrane proteins during membrane integration.

It is found in the cell inner membrane. Required for the insertion and/or proper folding and/or complex formation of integral membrane proteins into the membrane. Involved in integration of membrane proteins that insert both dependently and independently of the Sec translocase complex, as well as at least some lipoproteins. Aids folding of multispanning membrane proteins. In Escherichia coli O139:H28 (strain E24377A / ETEC), this protein is Membrane protein insertase YidC.